A 331-amino-acid polypeptide reads, in one-letter code: MSQWHHVGGHWGQDRVFSGYSSAKKKGGNHIPERWKDYLPVGQRMPGTRFIAFKVPLKKSFEKHLAPEECFSPLDLFNKIQEQNEELGLIIDLTYTRRYYKPEELPENFPYLKIYTVGHQVPDDDTIFKFKNAVNGFLRENKDNDRLIGVHCTHGVNRTGYLICRYLIDVEGMRPDDAIELFSRCRGHCLERQNYIDDLRNGPIRKNWDSSVSRTRGFEDSTHMMEPVFTATKPVNRRPKHNIHQTQGYPEPRHFHTWTQDLQQSERKFSQNWNIYQRCHVPPPGPPGEDYFQRRYSWNVKPSAGQGGPNKRFSPGSYYRVPYSAYYRWTK.

Residues 61-208 (FEKHLAPEEC…LRNGPIRKNW (148 aa)) form the Tyrosine-protein phosphatase domain. The Phosphocysteine intermediate role is filled by C152. Substrate is bound at residue 153–158 (THGVNR). Residue R158 is the Proton donor/acceptor of the active site.

This sequence belongs to the protein-tyrosine phosphatase family. Non-receptor class dual specificity subfamily. As to quaternary structure, monomer. May interact with SFRS7 and SFRS9/SRP30C.

It localises to the nucleus. The protein resides in the nucleus speckle. Its function is as follows. Possesses RNA 5'-triphosphatase and diphosphatase activities, but displays a poor protein-tyrosine phosphatase activity. In addition, has phosphatase activity with ATP, ADP and O-methylfluorescein phosphate (in vitro). Binds to RNA. May participate in nuclear mRNA metabolism. The chain is RNA/RNP complex-1-interacting phosphatase (DUSP11) from Bos taurus (Bovine).